The chain runs to 425 residues: Divalent metal cation transporter MntH (425 aa).

Transmembrane regions (helical) follow at residues 30 to 50, 61 to 81, 107 to 127, 134 to 154, 167 to 187, 209 to 231, 255 to 275, 294 to 314, 344 to 364, 365 to 385, and 401 to 421; these read LLPFLGPAFIAAIAYIDPGNF, GYMLLWVILFSNIMALLIQSL, IGLWIQGELVIIATDLAEFIG, LLFGIPMLEASIIAAIGSFAI, AGIAGMLFVVVIAFALQTFFA, VLLAAGILGATVMPHAIYLHSAL, ILIAMLIAGAINASMLIVAAA, FGHLVSPMSAALFGIGLLVAG, FITIIPPILIIASGVNPTTAL, VLSQVVLSFGIAFALIPLIMF, and ITVVSWLIAVLIVALNVFLIV.

The protein belongs to the NRAMP family.

It localises to the cell membrane. H(+)-stimulated, divalent metal cation uptake system. Involved in manganese uptake. Can probably also transport cadmium, cobalt, copper and zinc, but not iron. May be the predominant transporter of manganese during logarithmic phase growth. The chain is Divalent metal cation transporter MntH from Bacillus subtilis (strain 168).